We begin with the raw amino-acid sequence, 242 residues long: Proteasome subunit beta type-4 (242 aa).

The propeptide occupies 1–23 (ESVARGTAPGELHCFPGAGPVRH). Thr-24 serves as the catalytic Nucleophile.

It belongs to the peptidase T1B family. The 26S proteasome consists of a 20S proteasome core and two 19S regulatory subunits. The 20S proteasome core is composed of 28 subunits that are arranged in four stacked rings, resulting in a barrel-shaped structure. The two end rings are each formed by seven alpha subunits, and the two central rings are each formed by seven beta subunits. The catalytic chamber with the active sites is on the inside of the barrel.

It localises to the cytoplasm. The protein localises to the nucleus. Functionally, non-catalytic component of the proteasome, a multicatalytic proteinase complex which is characterized by its ability to cleave peptides with Arg, Phe, Tyr, Leu, and Glu adjacent to the leaving group at neutral or slightly basic pH. The proteasome has an ATP-dependent proteolytic activity. This is Proteasome subunit beta type-4 (psmb4) from Xenopus laevis (African clawed frog).